Reading from the N-terminus, the 67-residue chain is Ferredoxin FdxE (67 aa).

Residues cysteine 10, valine 11, glutamine 15, cysteine 16, and cysteine 54 each contribute to the [3Fe-4S] cluster site.

As to quaternary structure, interacts with the cytochrome P450 143 with high affinity (Kd=84 nM). It depends on [3Fe-4S] cluster as a cofactor.

In terms of biological role, ferredoxin that is the redox partner of cytochrome CYP143, a cytochrome P450 encoded by an adjacent gene. This is Ferredoxin FdxE from Mycobacterium tuberculosis (strain ATCC 25618 / H37Rv).